A 228-amino-acid chain; its full sequence is Cytidylate kinase (228 aa).

17-25 serves as a coordination point for ATP; sequence GPTASGKGT.

Belongs to the cytidylate kinase family. Type 1 subfamily.

It localises to the cytoplasm. It catalyses the reaction CMP + ATP = CDP + ADP. The catalysed reaction is dCMP + ATP = dCDP + ADP. This Burkholderia vietnamiensis (strain G4 / LMG 22486) (Burkholderia cepacia (strain R1808)) protein is Cytidylate kinase.